Reading from the N-terminus, the 143-residue chain is UPF0201 protein PAE1632 (143 aa).

Belongs to the UPF0201 family.

In Pyrobaculum aerophilum (strain ATCC 51768 / DSM 7523 / JCM 9630 / CIP 104966 / NBRC 100827 / IM2), this protein is UPF0201 protein PAE1632.